Reading from the N-terminus, the 237-residue chain is Lectin alpha chain (237 aa).

Mn(2+)-binding residues include Glu-8 and Asp-10. Residues Asp-10, Tyr-12, Asn-14, and Asp-19 each coordinate Ca(2+). Residue Tyr-12 participates in a carbohydrate binding. Mn(2+) contacts are provided by Asp-19, His-24, and Ser-34. 99–100 contacts a carbohydrate; the sequence is LY. Asp-208 lines the Ca(2+) pocket. Residue Arg-228 coordinates a carbohydrate.

This sequence belongs to the leguminous lectin family. As to quaternary structure, equilibrium between homodimer and homotetramer. Oligomerization is pH-dependent with homotetramers forming at pH 6.5 and above. Post-translationally, the beta and gamma chains are produced by partial proteolytic processing of the lectin alpha chain by an asparaginyl endopeptidase. Mixture of 60% alpha lectin and 40% of its beta and gamma proteolytic fragments. Seed.

Its subcellular location is the vacuole. The protein localises to the aleurone grain. D-mannose/D-glucose-binding lectin. Induces histamine release in mast cells from hamster and rat. Induces lymphocyte proliferation and IFNG production. This chain is Lectin alpha chain, found in Macropsychanthus bicolor (Dioclea rostrata).